The chain runs to 384 residues: Urea transporter 1 (384 aa).

At glutamate 39 the chain carries Phosphoserine. 5 helical membrane-spanning segments follow: residues 61–81 (ISQVVFVSNPISGILILVGLL), 85–105 (PWWALCGCVGTVVSTLTALLL), 111–131 (AIAAGLQGYNATLVGILMAVF), 138–158 (FWWLIFPVSAMSMTCPVFSSA), and 168–188 (LPVFTLPFNMALSMYLSATGH). An N-linked (GlcNAc...) asparagine glycan is attached at asparagine 206. 4 helical membrane passes run 250 to 270 (LMCLHAAIGSLLGVIAGLSLA), 276 to 296 (IYFGLWGFNSSLACIAIGGMF), 305 to 325 (LLALACALFTAYFGACMAHLM), and 327 to 347 (VVHLPACTWSFCLATLLFLLL).

Belongs to the urea transporter family. In terms of assembly, homotrimer; each subunit contains a pore through which urea permeates. Identified in a complex with STOM. Post-translationally, N-glycosylated in red blood cells, as well as in most non-erythroid tissues, except in the gastrocnemius muscle and in the gastrointestinal tract, including liver, colon and stomach. Expressed in brain, kidney, heart, liver, lung, skeletal muscle, spleen, testis, ureter and urinary bladder (at protein level). Along the gastrointestinal tract, detected in colon, jejunum and stomach (at protein level). In the kidney, expressed in some microvessels of the inner and outer medulla, but not all (at protein level). Not detected in the cortex (at protein level). Detected in the urothelium all along the urinary tract, including the papilla surface, the ureter, the bladder and the urethra (at protein level). In the brain, expressed at the border of the corpus callosum and striatum in astrocytic cellular processes surrounding blood microvessels (at protein level). Detected in erythrocytes (at protein level).

The protein localises to the cell membrane. The protein resides in the basolateral cell membrane. It catalyses the reaction urea(in) = urea(out). Its function is as follows. Mediates the transport of urea driven by a concentration gradient across the cell membranes of erythrocytes and the renal inner medullary collecting duct which is critical to the urinary concentrating mechanism. Facilitates water transport in erythrocytes. This chain is Urea transporter 1 (Slc14a1), found in Mus musculus (Mouse).